Consider the following 800-residue polypeptide: Phenylalanine--tRNA ligase beta subunit (800 aa).

The tRNA-binding domain occupies 39–154 (TKEIKNLVVG…TEVKPGTDAL (116 aa)). Residues 408 to 483 (CFVTPIDISV…RIYGYDKIPS (76 aa)) form the B5 domain. Asp-461, Asp-467, Glu-470, and Glu-471 together coordinate Mg(2+). The 93-residue stretch at 708-800 (PRFPGVSRDI…ALKSEGATIR (93 aa)) folds into the FDX-ACB domain.

Belongs to the phenylalanyl-tRNA synthetase beta subunit family. Type 1 subfamily. As to quaternary structure, tetramer of two alpha and two beta subunits. Requires Mg(2+) as cofactor.

It localises to the cytoplasm. The enzyme catalyses tRNA(Phe) + L-phenylalanine + ATP = L-phenylalanyl-tRNA(Phe) + AMP + diphosphate + H(+). The sequence is that of Phenylalanine--tRNA ligase beta subunit from Staphylococcus saprophyticus subsp. saprophyticus (strain ATCC 15305 / DSM 20229 / NCIMB 8711 / NCTC 7292 / S-41).